The sequence spans 728 residues: Diacylglycerol kinase 1 (728 aa).

A helical transmembrane segment spans residues 27 to 48 (GLMFSCFVAALVGILTIAYTAF). Phorbol-ester/DAG-type zinc fingers lie at residues 79 to 137 (PHSW…PKDC) and 149 to 212 (VHQW…GDIC). 2 disordered regions span residues 265 to 296 (KQTN…PTVN) and 308 to 336 (VMNG…TGSF). Positions 267-294 (TNETSADTGNSGSNCDESTESTADTGPT) are enriched in polar residues. The span at 310–319 (NGDSSNGDSD) shows a compositional bias: low complexity. In terms of domain architecture, DAGKc spans 357-496 (SDARPLLVFI…LDRWKVSILN (140 aa)). Residues lysine 491 and lysine 500 each participate in a glycyl lysine isopeptide (Lys-Gly) (interchain with G-Cter in ubiquitin) cross-link.

It belongs to the eukaryotic diacylglycerol kinase family. As to quaternary structure, monomer. Expressed in roots, shoots, and leaves.

The protein localises to the membrane. The enzyme catalyses a 1,2-diacyl-sn-glycerol + ATP = a 1,2-diacyl-sn-glycero-3-phosphate + ADP + H(+). Functionally, phosphorylates the second messenger diacylglycerol (DAG) to generate phosphatidic acid (PA), another important signaling molecule. PA is required for plant development and responses to abiotic stress and pathogen attack. May be involved in the accumulation of PA during cold stress. The sequence is that of Diacylglycerol kinase 1 (DGK1) from Arabidopsis thaliana (Mouse-ear cress).